A 434-amino-acid chain; its full sequence is Glutamine synthetase leaf isozyme, chloroplastic (434 aa).

Disordered regions lie at residues 1–33 and 101–126; these read MQVRRDDDGAGGCAGDAVPGGGEGQDGVPARQP and TISKPVEDPSELPKWNYDGSSTGQAP. A chloroplast-targeting transit peptide spans 1–54; sequence MQVRRDDDGAGGCAGDAVPGGGEGQDGVPARQPAGRVWGVSRAARATSGFKVLA. Positions 10 to 25 are enriched in gly residues; sequence AGGCAGDAVPGGGEGQ. Residues 81–161 enclose the GS beta-grasp domain; sequence IIAEYIWVGG…VICDTYTPQG (81 aa). The GS catalytic domain occupies 168–434; it reads KRHMAAQIFS…LAAKKLALKV (267 aa).

This sequence belongs to the glutamine synthetase family. In terms of assembly, homooctamer.

The protein localises to the plastid. It localises to the chloroplast. The enzyme catalyses L-glutamate + NH4(+) + ATP = L-glutamine + ADP + phosphate + H(+). Its function is as follows. The light-modulated chloroplast enzyme, encoded by a nuclear gene and expressed primarily in leaves, is responsible for the reassimilation of the ammonia generated by photorespiration. This chain is Glutamine synthetase leaf isozyme, chloroplastic, found in Hordeum vulgare (Barley).